We begin with the raw amino-acid sequence, 436 residues long: D-aminoacyl-tRNA deacylase (436 aa).

Belongs to the DtdA deacylase family. As to quaternary structure, monomer. Zn(2+) serves as cofactor.

The enzyme catalyses a D-aminoacyl-tRNA + H2O = a tRNA + a D-alpha-amino acid + H(+). The catalysed reaction is glycyl-tRNA(Ala) + H2O = tRNA(Ala) + glycine + H(+). D-aminoacyl-tRNA deacylase with broad substrate specificity. By recycling D-aminoacyl-tRNA to D-amino acids and free tRNA molecules, this enzyme counteracts the toxicity associated with the formation of D-aminoacyl-tRNA entities in vivo. This Methanoregula boonei (strain DSM 21154 / JCM 14090 / 6A8) protein is D-aminoacyl-tRNA deacylase.